Here is an 87-residue protein sequence, read N- to C-terminus: NADH dehydrogenase [ubiquinone] 1 alpha subcomplex subunit 4-like 2 (87 aa).

It belongs to the complex I NDUFA4 subunit family.

This chain is NADH dehydrogenase [ubiquinone] 1 alpha subcomplex subunit 4-like 2 (NDUFA4L2), found in Homo sapiens (Human).